We begin with the raw amino-acid sequence, 250 residues long: Nuclear transcription factor Y subunit C-4 (250 aa).

Low complexity predominate over residues Met-1–Gln-10. Disordered regions lie at residues Met-1–Ser-35 and Gly-209–Gly-250. Over residues Pro-214 to Asn-225 the composition is skewed to polar residues. Residues Ala-227 to Gly-242 are compositionally biased toward gly residues.

Belongs to the NFYC/HAP5 subunit family. Heterotrimeric transcription factor composed of three components, NF-YA, NF-YB and NF-YC. NF-YB and NF-YC must interact and dimerize for NF-YA association and DNA binding. In terms of tissue distribution, ubiquitous. Present in etiolated seedlings.

The protein localises to the nucleus. Stimulates the transcription of various genes by recognizing and binding to a CCAAT motif in promoters. Involved in the abscisic acid (ABA) signaling pathway. The chain is Nuclear transcription factor Y subunit C-4 (NFYC4) from Arabidopsis thaliana (Mouse-ear cress).